A 661-amino-acid polypeptide reads, in one-letter code: UvrABC system protein C (661 aa).

Positions 26-105 constitute a GIY-YIG domain; the sequence is AEPGCYLMRD…IKNHQPHFNV (80 aa). In terms of domain architecture, UVR spans 215-250; it reads DELQNLLQEQMHKYADRTDYESAARVRDQLQGLDQL.

It belongs to the UvrC family. Interacts with UvrB in an incision complex.

The protein localises to the cytoplasm. Its function is as follows. The UvrABC repair system catalyzes the recognition and processing of DNA lesions. UvrC both incises the 5' and 3' sides of the lesion. The N-terminal half is responsible for the 3' incision and the C-terminal half is responsible for the 5' incision. The chain is UvrABC system protein C from Synechococcus sp. (strain CC9902).